The sequence spans 118 residues: MSCQQSQQQCQPPPKCTPKCPPKCPTPKCPPKCPPKCPPVSSCCSVSSGGCCGSSSGGSCGSSSGGCCSSGGGGCCLSHHRHHRSHRHRPQSSDCCSQPSGGSSCCGGGSGQHSGGCC.

Positions 1 to 10 are enriched in low complexity; that stretch reads MSCQQSQQQC. Disordered regions lie at residues 1–23 and 84–118; these read MSCQ…CPPK and RSHR…GGCC. A compositionally biased stretch (pro residues) spans 11-23; it reads QPPPKCTPKCPPK. Over residues 92–103 the composition is skewed to low complexity; sequence SSDCCSQPSGGS. A compositionally biased stretch (gly residues) spans 104–118; it reads SCCGGGSGQHSGGCC.

The protein belongs to the LCE family. In terms of assembly, interacts with CYSRT1. In terms of tissue distribution, skin-specific. Expression was readily detected in adult trunk skin, adult arm skin, fetal skin, penal skin, vulva, esophagus and tongue. Not expressed in the cervix, rectum, lung, colon, or placenta.

In terms of biological role, precursors of the cornified envelope of the stratum corneum. This chain is Late cornified envelope protein 1E (LCE1E), found in Homo sapiens (Human).